The sequence spans 181 residues: Endoribonuclease YbeY (181 aa).

Positions 140, 144, and 150 each coordinate Zn(2+).

Belongs to the endoribonuclease YbeY family. Requires Zn(2+) as cofactor.

Its subcellular location is the cytoplasm. Functionally, single strand-specific metallo-endoribonuclease involved in late-stage 70S ribosome quality control and in maturation of the 3' terminus of the 16S rRNA. This Dinoroseobacter shibae (strain DSM 16493 / NCIMB 14021 / DFL 12) protein is Endoribonuclease YbeY.